The chain runs to 439 residues: Enolase 2 (439 aa).

Substrate is bound by residues H160 and E169. E212 functions as the Proton donor in the catalytic mechanism. 3 residues coordinate Mg(2+): D247, E296, and D323. Residues E296 and D323 each contribute to the substrate site. The active-site Proton acceptor is the K348. Substrate contacts are provided by residues 375 to 378 and K399; that span reads SHRS.

This sequence belongs to the enolase family. As to quaternary structure, homodimer. Mg(2+) is required as a cofactor.

Its subcellular location is the cytoplasm. The catalysed reaction is (2R)-2-phosphoglycerate = phosphoenolpyruvate + H2O. It functions in the pathway carbohydrate degradation; glycolysis; pyruvate from D-glyceraldehyde 3-phosphate: step 4/5. The sequence is that of Enolase 2 (ENO2) from Debaryomyces hansenii (strain ATCC 36239 / CBS 767 / BCRC 21394 / JCM 1990 / NBRC 0083 / IGC 2968) (Yeast).